A 2370-amino-acid polypeptide reads, in one-letter code: Genome polyprotein (2370 aa).

G112 carries N-myristoyl glycine; by host lipidation. Disordered regions lie at residues 140–173 and 704–736; these read VGDM…GNVV and GADG…FDYP. Positions 154–171 are enriched in low complexity; that stretch reads GSNKGGSSTSPKSTSNGN. Polar residues predominate over residues 713–725; it reads APTSDLSDGNPTT. Positions 1358–1522 constitute an SF3 helicase domain; it reads YSTALSAISL…AAFSAAAALK (165 aa). 1384–1391 contacts ATP; it reads GPPGTGKS. Residue G1597 is the site of N-myristoyl glycine; by host attachment. Residues 1646–1666 traverse the membrane as a helical segment; that stretch reads IFAASSFLSLIAATLTIVRCL. The disordered stretch occupies residues 1674 to 1696; that stretch reads GAYSGTPVPKPRKKDLPKQPVYS. The residue at position 1676 (Y1676) is an O-(5'-phospho-RNA)-tyrosine. The 190-residue stretch at 1697 to 1886 folds into the Peptidase C3 domain; it reads GPVRRQGFDP…FSARLTPERV (190 aa). Catalysis depends on for protease 3C activity residues H1745, E1776, and C1849. Over residues 2007-2016 the composition is skewed to polar residues; it reads SPGYPWTTQG. The interval 2007-2026 is disordered; that stretch reads SPGYPWTTQGRSRRSLFDED. Residues 2122–2239 enclose the RdRp catalytic domain; the sequence is SNVWSIDYSC…GSNQDFHPRE (118 aa). Catalysis depends on for RdRp activity residues D2128 and D2225.

Interacts with capsid protein VP1. Interacts with capsid protein VP3. In terms of assembly, interacts with capsid protein VP0. Interacts with capsid protein VP3. As to quaternary structure, interacts with capsid protein VP0. Interacts with capsid protein VP1. Homodimer. Interacts with protein 2B. Interacts with protein 2C. In terms of assembly, homodimer. Interacts with host ABCD3. Interacts with protein 2A. Interacts with host ACBD3. As to quaternary structure, homodimer. Interacts with host ABCD3. Interacts with protein 2A. Interacts with protein 3A. Interacts with protein 3C. Interacts with host ACBD3. Homodimer. Interacts with host ABCD3 (via GOLD domain) and PI4KB; these interactions allow the formation of a viral protein/ACBD3/PI4KB complex in order to synthesize PI4P at the viral RNA replication sites. Interacts with protein 2C. Interacts with protein 3C. Protein 3C: Interacts with protein 2A. Protein 3C: Interacts with protein 2C. In terms of processing, specific enzymatic cleavages by the viral protease in vivo yield a variety of precursors and mature proteins. The leader protein-VP0 junction is cleaved by 3C proteinase. The VP1/2A junction is cleaved by the protein 3CD in association with protein 2A. Uridylylated by the polymerase and is covalently linked to the 5'-end of genomic RNA. This uridylylated form acts as a nucleotide-peptide primer for the polymerase.

The protein resides in the virion. The protein localises to the host cytoplasm. It localises to the host cytoplasmic vesicle membrane. Its subcellular location is the host Golgi apparatus membrane. It catalyses the reaction RNA(n) + a ribonucleoside 5'-triphosphate = RNA(n+1) + diphosphate. It carries out the reaction Selective cleavage of Gln-|-Gly bond in the poliovirus polyprotein. In other picornavirus reactions Glu may be substituted for Gln, and Ser or Thr for Gly.. The enzyme catalyses ATP + H2O = ADP + phosphate + H(+). Functionally, required for viral RNA replication and viral RNA encapsidation. Does not have any proteolytic activity. Forms an icosahedral capsid of pseudo T=3 symmetry with capsid proteins VP0 and VP3. Together they form an icosahedral capsid composed of 60 copies of each VP0, VP1, and VP3. All the three latter proteins contain a beta-sheet structure called beta-barrel jelly roll. In terms of biological role, forms an icosahedral capsid of pseudo T=3 symmetry with capsid proteins VP1 and VP3. Together they form an icosahedral capsid composed of 60 copies of each VP0, VP1, and VP3. All the three latter proteins contain a beta-sheet structure called beta-barrel jelly roll. Its function is as follows. Forms an icosahedral capsid of pseudo T=3 symmetry with capsid proteins VP0 and VP1. Together they form an icosahedral capsid composed of 60 copies of each VP0, VP1, and VP3. All the three latter proteins contain a beta-sheet structure called beta-barrel jelly roll. Functionally, required for viral RNA replication. Does not have any proteolytic activity. Affects membrane integrity and causes an increase in membrane permeability. In terms of biological role, induces and associates with structural rearrangements of intracellular membranes. Displays RNA-binding, nucleotide binding and NTPase activities. May play a role in virion morphogenesis and viral RNA encapsidation by interacting with the capsid protein VP3. Its function is as follows. Serves as membrane anchor via its hydrophobic domain. Plays an essential role in viral RNA replication by recruiting PI4KB at the viral replication sites, thereby allowing the formation of rearranged membranous structures where viral replication takes place. Functionally, forms a primer, VPg-pU, which is utilized by the polymerase for the initiation of RNA chains. Cysteine protease that generates mature viral proteins from the precursor polyprotein. In addition to its proteolytic activity, it binds to viral RNA, and thus influences viral genome replication. RNA and substrate cooperatively bind to the protease. In terms of biological role, replicates the genomic and antigenomic RNAs by recognizing replications specific signals. Performs VPg uridylylation. The polypeptide is Genome polyprotein (Homo sapiens (Human)).